Consider the following 217-residue polypeptide: Glyoxalase ElbB (217 aa).

Residue C135 is the Nucleophile of the active site.

This sequence belongs to the peptidase C56 family. Homodimer.

The enzyme catalyses glyoxal + H2O = glycolate + H(+). In terms of biological role, displays glyoxalase activity, catalyzing the conversion of glyoxal to glycolate. However, this apparent glyoxalase activity may reflect a protein deglycase activity, which could be the primary function of this protein like other DJ-1 superfamily members such as PARK7, YajL, YhbO and HchA. Is not able to use methylglyoxal as substrate. The protein is Glyoxalase ElbB of Escherichia coli (strain K12).